A 344-amino-acid polypeptide reads, in one-letter code: DNA fragmentation factor subunit beta (344 aa).

The 77-residue stretch at 7-83 (QPKCVKLRAL…LLTAGETWHG (77 aa)) folds into the CIDE-N domain.

As to quaternary structure, heterodimer of DFFA and DFFB. Interacts with H1-1.

It is found in the cytoplasm. The protein localises to the nucleus. Its activity is regulated as follows. Inhibited by DFFA (DFF45). Its function is as follows. Nuclease that induces DNA fragmentation and chromatin condensation during apoptosis. Degrades naked DNA and induces apoptotic morphology. This Mus musculus (Mouse) protein is DNA fragmentation factor subunit beta (Dffb).